Reading from the N-terminus, the 263-residue chain is MARGPKKHLKRVAAPKHWMLDKLTGVFAPRPSTGPHKLRECLPLIIFLRNRLKYALTGDEVKKICMQRFIKIDGKVRTDITYPAGFMDVISIEKTGEHFRLVYDTKGRFAVHRITAEEAKYKLCKVRKTWVGTKGIPHLVTHDARTIRYPDPLIKVNDTIQIDLETGKITDFIKFDTGNLCMVTGGANLGRIGVITNRERHPGSFDVVHVKDANGNSFATRLSNIFVIGKGNKPWISLPRGKGIRLTIAEERDKRLAAKQSSG.

Positions 42–104 constitute an S4 RNA-binding domain; the sequence is LPLIIFLRNR…TGEHFRLVYD (63 aa).

It belongs to the eukaryotic ribosomal protein eS4 family. As to quaternary structure, component of the small ribosomal subunit.

It localises to the cytoplasm. In terms of biological role, component of the small ribosomal subunit. The ribosome is a large ribonucleoprotein complex responsible for the synthesis of proteins in the cell. The polypeptide is Small ribosomal subunit protein eS4 (rps4) (Xenopus tropicalis (Western clawed frog)).